Reading from the N-terminus, the 1010-residue chain is Translation initiation factor IF-2 (1010 aa).

Disordered stretches follow at residues 54–350 and 364–420; these read KGLA…FEDD and PSFT…RPES. Residues 57-70 are compositionally biased toward polar residues; the sequence is ASSTSKNSTGQRES. Residues 112–124 are compositionally biased toward pro residues; sequence ISPPRPPVKPLVA. Polar residues predominate over residues 145 to 155; sequence HSPSVKETPTE. Residues 200 to 258 show a composition bias toward basic and acidic residues; it reads DRPRGEKRERGESENAPSPERRVGLAKPEKPTLNRKPDGKSPKLAEPAREVRETVELKR. Positions 378-389 are enriched in low complexity; sequence TAKAAPPGTPTA. Positions 406–419 are enriched in basic and acidic residues; the sequence is KSERQEPQEEKRPE. One can recognise a tr-type G domain in the interval 502 to 675; the sequence is RRPPVVTIMG…LLVAEVEELV (174 aa). Positions 511–518 are G1; it reads GHVDHGKT. 511-518 serves as a coordination point for GTP; the sequence is GHVDHGKT. The G2 stretch occupies residues 536-540; the sequence is GITQH. Residues 561–564 are G3; that stretch reads DTPG. Residues 561–565 and 615–618 contribute to the GTP site; these read DTPGH and NKVD. The G4 stretch occupies residues 615 to 618; it reads NKVD. The interval 651–653 is G5; sequence SAL.

This sequence belongs to the TRAFAC class translation factor GTPase superfamily. Classic translation factor GTPase family. IF-2 subfamily.

The protein localises to the cytoplasm. One of the essential components for the initiation of protein synthesis. Protects formylmethionyl-tRNA from spontaneous hydrolysis and promotes its binding to the 30S ribosomal subunits. Also involved in the hydrolysis of GTP during the formation of the 70S ribosomal complex. In Microcystis aeruginosa (strain NIES-843 / IAM M-2473), this protein is Translation initiation factor IF-2.